The following is a 116-amino-acid chain: Large ribosomal subunit protein bL17 (116 aa).

Belongs to the bacterial ribosomal protein bL17 family. As to quaternary structure, part of the 50S ribosomal subunit. Contacts protein L32.

In Prochlorococcus marinus (strain MIT 9303), this protein is Large ribosomal subunit protein bL17.